Consider the following 399-residue polypeptide: Carbamoyl phosphate synthase small chain (399 aa).

The tract at residues 1-204 (MTKTTLSSDP…WNKGYTINNE (204 aa)) is CPSase. Ser60, Gly256, and Gly258 together coordinate L-glutamine. Positions 208-396 (HIVAIDYGIK…HDLIVNYREQ (189 aa)) constitute a Glutamine amidotransferase type-1 domain. Cys285 (nucleophile) is an active-site residue. Residues Leu286, Gln289, Asn327, Gly329, and Phe330 each coordinate L-glutamine. Residues His369 and Glu371 contribute to the active site.

The protein belongs to the CarA family. Composed of two chains; the small (or glutamine) chain promotes the hydrolysis of glutamine to ammonia, which is used by the large (or ammonia) chain to synthesize carbamoyl phosphate. Tetramer of heterodimers (alpha,beta)4.

The enzyme catalyses hydrogencarbonate + L-glutamine + 2 ATP + H2O = carbamoyl phosphate + L-glutamate + 2 ADP + phosphate + 2 H(+). It carries out the reaction L-glutamine + H2O = L-glutamate + NH4(+). Its pathway is amino-acid biosynthesis; L-arginine biosynthesis; carbamoyl phosphate from bicarbonate: step 1/1. It participates in pyrimidine metabolism; UMP biosynthesis via de novo pathway; (S)-dihydroorotate from bicarbonate: step 1/3. In terms of biological role, small subunit of the glutamine-dependent carbamoyl phosphate synthetase (CPSase). CPSase catalyzes the formation of carbamoyl phosphate from the ammonia moiety of glutamine, carbonate, and phosphate donated by ATP, constituting the first step of 2 biosynthetic pathways, one leading to arginine and/or urea and the other to pyrimidine nucleotides. The small subunit (glutamine amidotransferase) binds and cleaves glutamine to supply the large subunit with the substrate ammonia. The protein is Carbamoyl phosphate synthase small chain of Bartonella bacilliformis (strain ATCC 35685 / KC583 / Herrer 020/F12,63).